The chain runs to 551 residues: Glucose-6-phosphate isomerase 2 (551 aa).

Glu-353 functions as the Proton donor in the catalytic mechanism. Active-site residues include His-384 and Lys-512.

It belongs to the GPI family.

Its subcellular location is the cytoplasm. The enzyme catalyses alpha-D-glucose 6-phosphate = beta-D-fructose 6-phosphate. It participates in carbohydrate biosynthesis; gluconeogenesis. Its pathway is carbohydrate degradation; glycolysis; D-glyceraldehyde 3-phosphate and glycerone phosphate from D-glucose: step 2/4. In terms of biological role, catalyzes the reversible isomerization of glucose-6-phosphate to fructose-6-phosphate. The protein is Glucose-6-phosphate isomerase 2 of Colwellia psychrerythraea (strain 34H / ATCC BAA-681) (Vibrio psychroerythus).